A 51-amino-acid polypeptide reads, in one-letter code: Sperm protamine P1 (51 aa).

The protein belongs to the protamine P1 family. Testis.

The protein resides in the nucleus. Its subcellular location is the chromosome. Protamines substitute for histones in the chromatin of sperm during the haploid phase of spermatogenesis. They compact sperm DNA into a highly condensed, stable and inactive complex. This is Sperm protamine P1 (PRM1) from Macaca mulatta (Rhesus macaque).